A 128-amino-acid chain; its full sequence is Small ribosomal subunit protein bS6 (128 aa).

This sequence belongs to the bacterial ribosomal protein bS6 family.

In terms of biological role, binds together with bS18 to 16S ribosomal RNA. This chain is Small ribosomal subunit protein bS6, found in Acinetobacter baylyi (strain ATCC 33305 / BD413 / ADP1).